The following is a 268-amino-acid chain: Esterase PIR7B (268 aa).

Ser86 (acyl-ester intermediate) is an active-site residue. Catalysis depends on charge relay system residues Asp218 and His246.

The protein belongs to the AB hydrolase superfamily.

Functionally, exhibits esterase activity towards naphthol AS-acetate in vitro. The chain is Esterase PIR7B (PIR7B) from Oryza sativa subsp. japonica (Rice).